Reading from the N-terminus, the 312-residue chain is 4-hydroxy-3-methylbut-2-enyl diphosphate reductase (312 aa).

Cys-15 lines the [4Fe-4S] cluster pocket. (2E)-4-hydroxy-3-methylbut-2-enyl diphosphate is bound by residues His-44 and His-77. The dimethylallyl diphosphate site is built by His-44 and His-77. Residues His-44 and His-77 each contribute to the isopentenyl diphosphate site. [4Fe-4S] cluster is bound at residue Cys-99. Position 127 (His-127) interacts with (2E)-4-hydroxy-3-methylbut-2-enyl diphosphate. His-127 is a dimethylallyl diphosphate binding site. His-127 lines the isopentenyl diphosphate pocket. Glu-129 (proton donor) is an active-site residue. Thr-167 is a (2E)-4-hydroxy-3-methylbut-2-enyl diphosphate binding site. Cys-197 is a [4Fe-4S] cluster binding site. The (2E)-4-hydroxy-3-methylbut-2-enyl diphosphate site is built by Ser-225, Ser-226, Asn-227, and Ser-269. Residues Ser-225, Ser-226, Asn-227, and Ser-269 each coordinate dimethylallyl diphosphate. Isopentenyl diphosphate-binding residues include Ser-225, Ser-226, Asn-227, and Ser-269.

Belongs to the IspH family. The cofactor is [4Fe-4S] cluster.

It catalyses the reaction isopentenyl diphosphate + 2 oxidized [2Fe-2S]-[ferredoxin] + H2O = (2E)-4-hydroxy-3-methylbut-2-enyl diphosphate + 2 reduced [2Fe-2S]-[ferredoxin] + 2 H(+). It carries out the reaction dimethylallyl diphosphate + 2 oxidized [2Fe-2S]-[ferredoxin] + H2O = (2E)-4-hydroxy-3-methylbut-2-enyl diphosphate + 2 reduced [2Fe-2S]-[ferredoxin] + 2 H(+). It participates in isoprenoid biosynthesis; dimethylallyl diphosphate biosynthesis; dimethylallyl diphosphate from (2E)-4-hydroxy-3-methylbutenyl diphosphate: step 1/1. It functions in the pathway isoprenoid biosynthesis; isopentenyl diphosphate biosynthesis via DXP pathway; isopentenyl diphosphate from 1-deoxy-D-xylulose 5-phosphate: step 6/6. Catalyzes the conversion of 1-hydroxy-2-methyl-2-(E)-butenyl 4-diphosphate (HMBPP) into a mixture of isopentenyl diphosphate (IPP) and dimethylallyl diphosphate (DMAPP). Acts in the terminal step of the DOXP/MEP pathway for isoprenoid precursor biosynthesis. The protein is 4-hydroxy-3-methylbut-2-enyl diphosphate reductase of Azoarcus sp. (strain BH72).